Here is a 511-residue protein sequence, read N- to C-terminus: Histidine ammonia-lyase 2 (511 aa).

Positions 144-146 (SSG) form a cross-link, 5-imidazolinone (Ser-Gly). Ser-145 is subject to 2,3-didehydroalanine (Ser).

Belongs to the PAL/histidase family. Contains an active site 4-methylidene-imidazol-5-one (MIO), which is formed autocatalytically by cyclization and dehydration of residues Ser-Ser-Gly.

It localises to the cytoplasm. It catalyses the reaction L-histidine = trans-urocanate + NH4(+). It functions in the pathway amino-acid degradation; L-histidine degradation into L-glutamate; N-formimidoyl-L-glutamate from L-histidine: step 1/3. The chain is Histidine ammonia-lyase 2 (hutH2) from Fusobacterium nucleatum subsp. nucleatum (strain ATCC 25586 / DSM 15643 / BCRC 10681 / CIP 101130 / JCM 8532 / KCTC 2640 / LMG 13131 / VPI 4355).